Reading from the N-terminus, the 93-residue chain is Secretoglobin family 3A member 2 (93 aa).

A signal peptide spans 1–21 (MKLVTIFLLVTISLCSYSATA).

This sequence belongs to the secretoglobin family. UGRP subfamily. In terms of assembly, homodimer; disulfide-linked. Monomer. Interacts with APOA1. In terms of tissue distribution, highly expressed in lung and trachea. Detected throughout the airway epithelium in lung, with slightly higher expression in large airways. Found in lung submucosal gland acinus where it localizes to serous-like cells. Probably expressed in club cells of the bronchioles. Not detected in other tissues tested.

Its subcellular location is the secreted. In terms of biological role, secreted cytokine-like protein. Binds to the scavenger receptor MARCO. Can also bind to pathogens including the Gram-positive bacterium L.monocytogenes, the Gram-negative bacterium P.aeruginosa, and yeast. Strongly inhibits phospholipase A2 (PLA2G1B) activity. Seems to have anti-inflammatory effects in respiratory epithelium. Also has anti-fibrotic activity in lung. May play a role in fetal lung development and maturation. Promotes branching morphogenesis during early stages of lung development. In the pituitary, may inhibit production of follicle-stimulating hormone (FSH) and luteinizing hormone (LH). In Homo sapiens (Human), this protein is Secretoglobin family 3A member 2 (SCGB3A2).